We begin with the raw amino-acid sequence, 286 residues long: 2-oxoglutarate synthase subunit KorB (286 aa).

In terms of assembly, heterotetramer of the KorA, KorB, KorC and KorD subunits.

The enzyme catalyses 2 oxidized [2Fe-2S]-[ferredoxin] + 2-oxoglutarate + CoA = succinyl-CoA + 2 reduced [2Fe-2S]-[ferredoxin] + CO2 + H(+). The polypeptide is 2-oxoglutarate synthase subunit KorB (korB) (Methanothermobacter thermautotrophicus (strain ATCC 29096 / DSM 1053 / JCM 10044 / NBRC 100330 / Delta H) (Methanobacterium thermoautotrophicum)).